The primary structure comprises 262 residues: uncharacterized protein (262 aa).

Belongs to the AB hydrolase superfamily. AB hydrolase 2 family.

This is an uncharacterized protein from Mycosarcoma maydis (Corn smut fungus).